The chain runs to 461 residues: MQRTQIVDALAATAPQPVIRLCGWVRTRRDAKGFSFLEINDGSCLANIQAIVDEGIPAYANIGAVSTGAAVDITGELVESPGKGQKWEVRVQTLTLLGAADAETYPLQKKRHSDEFLRSIAHLRARTNKYGAAFRIRSEAAFAIHEFYRERGFFYVHTPILTGSDCEGAGEMFRVTTLPVEGSATPASGNRYENDFFGKECNLTVSGQLEAETLALGLGKVYTFGPTFRAENSNTPRHAAEFWMIEPEVAFADLEEDMNLAEDMTRTVVRRILDRCAADLDLFNRFVDTTLVERLRQIADEPFARCSYTEAIELLLKSGKKFEYPVSFGLDLQTEHERYLAEEHFGKPVIVYNYPKEIKAFYMRLNDDGRTVAAMDVLVPRIGELIGGSQREERLDVLEARINEMGQNLEDYWWYLDLRRFGSVPHAGFGMGFERLLMLLTGITNIRDVIPFPRTPGNLEF.

The protein belongs to the class-II aminoacyl-tRNA synthetase family. As to quaternary structure, homodimer.

The protein resides in the cytoplasm. The catalysed reaction is tRNA(Asn) + L-asparagine + ATP = L-asparaginyl-tRNA(Asn) + AMP + diphosphate + H(+). This is Asparagine--tRNA ligase from Nitratidesulfovibrio vulgaris (strain ATCC 29579 / DSM 644 / CCUG 34227 / NCIMB 8303 / VKM B-1760 / Hildenborough) (Desulfovibrio vulgaris).